Consider the following 122-residue polypeptide: Large ribosomal subunit protein uL14 (122 aa).

The protein belongs to the universal ribosomal protein uL14 family. Part of the 50S ribosomal subunit. Forms a cluster with proteins L3 and L19. In the 70S ribosome, L14 and L19 interact and together make contacts with the 16S rRNA in bridges B5 and B8.

Functionally, binds to 23S rRNA. Forms part of two intersubunit bridges in the 70S ribosome. In Oenococcus oeni (strain ATCC BAA-331 / PSU-1), this protein is Large ribosomal subunit protein uL14.